The following is a 137-amino-acid chain: Protein archease (137 aa).

Residues aspartate 11, aspartate 136, and isoleucine 137 each contribute to the Ca(2+) site.

It belongs to the archease family.

Functionally, activates the tRNA-splicing ligase complex by facilitating the enzymatic turnover of catalytic subunit RtcB. Acts by promoting the guanylylation of RtcB, a key intermediate step in tRNA ligation. Can also alter the NTP specificity of RtcB such that ATP, dGTP or ITP is used efficiently. This is Protein archease from Archaeoglobus fulgidus (strain ATCC 49558 / DSM 4304 / JCM 9628 / NBRC 100126 / VC-16).